A 215-amino-acid chain; its full sequence is MSERSVSKSREQKRWYSVLAPEQFDRQELGETLAEEPDQVVGRTITTTLGELTGDSGANNTKLTFKITDVGSDTAYTEFIKYELTRDYLRSLVRRGASKVEASITVLTTDDYRIRVQPVALTTKKADRSQEKAIRRVMIDKVHAAAEDRTFESFVDAIVEGNLSSAIYGDAKLIYPLRRVEIQKLTLEARPSEVAAEEETAVDVDADEVAVDADE.

The protein belongs to the eukaryotic ribosomal protein eS1 family.

The chain is Small ribosomal subunit protein eS1 from Halorubrum lacusprofundi (strain ATCC 49239 / DSM 5036 / JCM 8891 / ACAM 34).